The following is a 139-amino-acid chain: Putative pre-16S rRNA nuclease (139 aa).

Belongs to the YqgF nuclease family.

The protein resides in the cytoplasm. In terms of biological role, could be a nuclease involved in processing of the 5'-end of pre-16S rRNA. In Streptococcus thermophilus (strain CNRZ 1066), this protein is Putative pre-16S rRNA nuclease.